The sequence spans 228 residues: Tol-Pal system protein TolQ (228 aa).

3 helical membrane passes run 16 to 36, 137 to 157, and 172 to 192; these read IVVQLVIVILISFSIISWAII, VSPYIGLFGTVWGIMHAFMAL, and IAEALIATAIGLFAAIPAVMA.

The protein belongs to the ExbB/TolQ family. The Tol-Pal system is composed of five core proteins: the inner membrane proteins TolA, TolQ and TolR, the periplasmic protein TolB and the outer membrane protein Pal. They form a network linking the inner and outer membranes and the peptidoglycan layer.

It is found in the cell inner membrane. In terms of biological role, part of the Tol-Pal system, which plays a role in outer membrane invagination during cell division and is important for maintaining outer membrane integrity. The sequence is that of Tol-Pal system protein TolQ from Haemophilus influenzae (strain ATCC 51907 / DSM 11121 / KW20 / Rd).